The primary structure comprises 540 residues: Phosphoenolpyruvate carboxykinase (ATP) (540 aa).

A substrate-binding site is contributed by Arg-65. Lys-87 is modified (N6-acetyllysine). The substrate site is built by Tyr-207 and Lys-213. Residues Lys-213, His-232, and 248–256 contribute to the ATP site; that span reads GLSGTGKTT. Positions 213 and 232 each coordinate Mn(2+). Position 269 (Asp-269) interacts with Mn(2+). ATP contacts are provided by residues Glu-297, Arg-333, 449-450, and Thr-455; that span reads RI. Arg-333 serves as a coordination point for substrate. The residue at position 523 (Lys-523) is an N6-acetyllysine.

It belongs to the phosphoenolpyruvate carboxykinase (ATP) family. Monomer. The cofactor is Mn(2+).

The protein localises to the cytoplasm. The catalysed reaction is oxaloacetate + ATP = phosphoenolpyruvate + ADP + CO2. Its pathway is carbohydrate biosynthesis; gluconeogenesis. Involved in the gluconeogenesis. Catalyzes the conversion of oxaloacetate (OAA) to phosphoenolpyruvate (PEP) through direct phosphoryl transfer between the nucleoside triphosphate and OAA. In Escherichia coli O45:K1 (strain S88 / ExPEC), this protein is Phosphoenolpyruvate carboxykinase (ATP).